The following is a 212-amino-acid chain: uncharacterized protein (212 aa).

2 helical membrane-spanning segments follow: residues 54-74 (LCFA…GYAG) and 79-99 (WIIC…ALLL).

The protein resides in the cell membrane. This is an uncharacterized protein from Chlamydia pneumoniae (Chlamydophila pneumoniae).